The sequence spans 155 residues: Riboflavin synthase (155 aa).

It belongs to the DMRL synthase family.

The catalysed reaction is 2 6,7-dimethyl-8-(1-D-ribityl)lumazine + H(+) = 5-amino-6-(D-ribitylamino)uracil + riboflavin. It participates in cofactor biosynthesis; riboflavin biosynthesis; riboflavin from 2-hydroxy-3-oxobutyl phosphate and 5-amino-6-(D-ribitylamino)uracil: step 2/2. The polypeptide is Riboflavin synthase (ribC) (Aeropyrum pernix (strain ATCC 700893 / DSM 11879 / JCM 9820 / NBRC 100138 / K1)).